The chain runs to 575 residues: Alpha-(1,6)-fucosyltransferase (575 aa).

The Cytoplasmic portion of the chain corresponds to 1-9 (MRPWTGSWR). Residues 10–30 (WIMLILFAWGTLLFYIGGHLV) traverse the membrane as a helical; Signal-anchor for type II membrane protein segment. The Lumenal portion of the chain corresponds to 31–575 (RDNDHPDHSS…KVPHVPEAEK (545 aa)). Cystine bridges form between Cys-204–Cys-266, Cys-212–Cys-230, and Cys-218–Cys-222. Positions 206–493 (KAKKLVCNIN…PDASANFHSL (288 aa)) constitute a GT23 domain. Residue Ser-278 is modified to Phosphoserine. The SH3-binding signature appears at 299–305 (PRPPYLP). The segment at 365-366 (RR) is important for donor substrate binding. Cys-465 and Cys-472 are joined by a disulfide. Residues 502–563 (QNAHNQIAIY…PSYKVREKIE (62 aa)) form the SH3 domain.

The protein belongs to the glycosyltransferase 23 family. In terms of processing, tyrosine phosphorylated by PKDCC/VLK. In terms of tissue distribution, highest expression found in brain. Also found in heart, lung, spleen and kidney.

It is found in the golgi apparatus. It localises to the golgi stack membrane. The enzyme catalyses N(4)-{beta-D-GlcNAc-(1-&gt;2)-alpha-D-Man-(1-&gt;3)-[beta-D-GlcNAc-(1-&gt;2)-alpha-D-Man-(1-&gt;6)]-beta-D-Man-(1-&gt;4)-beta-D-GlcNAc-(1-&gt;4)-beta-D-GlcNAc}-L-asparaginyl-[protein] + GDP-beta-L-fucose = an N(4)-{beta-D-GlcNAc-(1-&gt;2)-alpha-D-Man-(1-&gt;3)-[beta-D-GlcNAc-(1-&gt;2)-alpha-D-Man-(1-&gt;6)]-beta-D-Man-(1-&gt;4)-beta-D-GlcNAc-(1-&gt;4)-[alpha-L-Fuc-(1-&gt;6)]-beta-D-GlcNAc}-L-asparaginyl-[protein] + GDP + H(+). The protein operates within protein modification; protein glycosylation. Its function is as follows. Catalyzes the addition of fucose in alpha 1-6 linkage to the first GlcNAc residue, next to the peptide chains in N-glycans. The chain is Alpha-(1,6)-fucosyltransferase (FUT8) from Bos taurus (Bovine).